Here is a 146-residue protein sequence, read N- to C-terminus: Hemoglobin cathodic subunit beta (146 aa).

A Globin domain is found at 2–146 (QWSSSERSTI…VVSALSRQYF (145 aa)). Heme b-binding residues include His63 and His92.

Belongs to the globin family. Heterotetramer of two alpha chains and two beta chains. Red blood cells.

Its function is as follows. Involved in oxygen transport from the gills to the various peripheral tissues. This Conger conger (Conger eel) protein is Hemoglobin cathodic subunit beta.